Reading from the N-terminus, the 957-residue chain is Receptor-like protein 53 (957 aa).

A signal peptide spans 1–30; that stretch reads MEGFWNSKSIIRITLSFIFLFICHFLDVLA. The Extracellular segment spans residues 31–910; it reads APTRNLCRPE…EEEDEDLISW (880 aa). N-linked (GlcNAc...) asparagine glycans are attached at residues Asn78, Asn114, Asn143, Asn167, and Asn191. 12 LRR repeats span residues 120 to 143, 144 to 170, 172 to 192, 193 to 216, 217 to 240, 241 to 266, 268 to 287, 288 to 312, 313 to 336, 338 to 360, 361 to 384, and 386 to 409; these read LHFL…SIEN, LSHL…NLSR, TYLN…ICNL, SHLT…IGGL, SHLT…IGNL, SNLT…NLSQ, TFLG…SFGN, LNQL…LLNL, TGLS…ITSL, NLMD…LFTI, PSLT…NISS, and SNLY…ISKL. 4 N-linked (GlcNAc...) asparagine glycosylation sites follow: Asn239, Asn242, Asn252, and Asn263. Asn311 and Asn332 each carry an N-linked (GlcNAc...) asparagine glycan. The N-linked (GlcNAc...) asparagine glycan is linked to Asn381. Residues 412–433 form an LRR 13; degenerate repeat; the sequence is LFRLDISHLNTQGPVDFSIFSH. 16 LRR repeats span residues 434 to 458, 460 to 483, 486 to 509, 510 to 533, 535 to 556, 558 to 580, 581 to 604, 605 to 629, 631 to 651, 652 to 674, 675 to 697, 698 to 721, 765 to 789, 790 to 813, 814 to 837, and 839 to 862; these read LKSL…YFLS, FKRL…SVSD, SQLI…VRTQ, HELG…LWRL, ILYY…SKPE, SLLY…ICGL, RSLN…MGHL, KSTL…IFEI, RSLD…LSFF, STLE…WLSS, LPKL…EATF, PELR…YFVK, LTIY…IGLL, KELL…MGNL, TALE…LGDL, and FLAY…QFLT. Asn441, Asn446, and Asn477 each carry an N-linked (GlcNAc...) asparagine glycan. Residues Asn540 and Asn543 are each glycosylated (N-linked (GlcNAc...) asparagine). N-linked (GlcNAc...) asparagine glycosylation occurs at Asn594. Asn665 carries an N-linked (GlcNAc...) asparagine glycan. Asn711 carries an N-linked (GlcNAc...) asparagine glycan. Residue Asn812 is glycosylated (N-linked (GlcNAc...) asparagine). Residues Asn844 and Asn864 are each glycosylated (N-linked (GlcNAc...) asparagine). Residues 911 to 931 form a helical membrane-spanning segment; it reads IAAAIGFGPGIAFGLMFGYIL. Topologically, residues 932 to 957 are cytoplasmic; that stretch reads VSYKPEWFMNPFDRNNRRQKRHKTTH.

This sequence belongs to the RLP family.

The protein localises to the cell membrane. The polypeptide is Receptor-like protein 53 (Arabidopsis thaliana (Mouse-ear cress)).